We begin with the raw amino-acid sequence, 379 residues long: Flap endonuclease 1 (379 aa).

Residues Met-1–Arg-105 are N-domain. Asp-34 serves as a coordination point for Mg(2+). Residues Arg-47 and Arg-71 each contribute to the DNA site. 5 residues coordinate Mg(2+): Asp-87, Glu-159, Glu-161, Asp-180, and Asp-182. The interval Asp-123 to His-254 is I-domain. Position 159 (Glu-159) interacts with DNA. Residues Gly-232 and Asp-234 each coordinate DNA. Asp-234 lines the Mg(2+) pocket. Positions Val-341 to Phe-349 are interaction with PCNA. A disordered region spans residues Arg-344 to Lys-379. Residues Lys-361–Lys-379 show a composition bias toward basic residues.

It belongs to the XPG/RAD2 endonuclease family. FEN1 subfamily. Interacts with PCNA. Three molecules of FEN1 bind to one PCNA trimer with each molecule binding to one PCNA monomer. PCNA stimulates the nuclease activity without altering cleavage specificity. The cofactor is Mg(2+). Phosphorylated. Phosphorylation upon DNA damage induces relocalization to the nuclear plasma.

The protein localises to the nucleus. It localises to the nucleolus. The protein resides in the nucleoplasm. Its subcellular location is the mitochondrion. Functionally, structure-specific nuclease with 5'-flap endonuclease and 5'-3' exonuclease activities involved in DNA replication and repair. During DNA replication, cleaves the 5'-overhanging flap structure that is generated by displacement synthesis when DNA polymerase encounters the 5'-end of a downstream Okazaki fragment. It enters the flap from the 5'-end and then tracks to cleave the flap base, leaving a nick for ligation. Also involved in the long patch base excision repair (LP-BER) pathway, by cleaving within the apurinic/apyrimidinic (AP) site-terminated flap. Acts as a genome stabilization factor that prevents flaps from equilibrating into structures that lead to duplications and deletions. Also possesses 5'-3' exonuclease activity on nicked or gapped double-stranded DNA, and exhibits RNase H activity. Also involved in replication and repair of rDNA and in repairing mitochondrial DNA. The chain is Flap endonuclease 1 from Debaryomyces hansenii (strain ATCC 36239 / CBS 767 / BCRC 21394 / JCM 1990 / NBRC 0083 / IGC 2968) (Yeast).